The following is a 342-amino-acid chain: GTP 3',8-cyclase (342 aa).

In terms of domain architecture, Radical SAM core spans 18–247 (GFSRRFYYLR…QLRGADDGPA (230 aa)). GTP is bound at residue arginine 27. Residues cysteine 34 and cysteine 38 each coordinate [4Fe-4S] cluster. An S-adenosyl-L-methionine-binding site is contributed by tyrosine 40. Cysteine 41 serves as a coordination point for [4Fe-4S] cluster. A GTP-binding site is contributed by arginine 81. Glycine 85 serves as a coordination point for S-adenosyl-L-methionine. Residue threonine 112 participates in GTP binding. Serine 136 is a binding site for S-adenosyl-L-methionine. Lysine 173 provides a ligand contact to GTP. Residue methionine 207 participates in S-adenosyl-L-methionine binding. Residues cysteine 270 and cysteine 273 each coordinate [4Fe-4S] cluster. 275–277 (RLR) provides a ligand contact to GTP. Cysteine 287 serves as a coordination point for [4Fe-4S] cluster.

The protein belongs to the radical SAM superfamily. MoaA family. In terms of assembly, monomer and homodimer. The cofactor is [4Fe-4S] cluster.

The enzyme catalyses GTP + AH2 + S-adenosyl-L-methionine = (8S)-3',8-cyclo-7,8-dihydroguanosine 5'-triphosphate + 5'-deoxyadenosine + L-methionine + A + H(+). Its pathway is cofactor biosynthesis; molybdopterin biosynthesis. Functionally, catalyzes the cyclization of GTP to (8S)-3',8-cyclo-7,8-dihydroguanosine 5'-triphosphate. This Aeromonas hydrophila subsp. hydrophila (strain ATCC 7966 / DSM 30187 / BCRC 13018 / CCUG 14551 / JCM 1027 / KCTC 2358 / NCIMB 9240 / NCTC 8049) protein is GTP 3',8-cyclase.